We begin with the raw amino-acid sequence, 314 residues long: E3 ubiquitin-protein ligase CHIP (314 aa).

The span at Met-1–Gly-11 shows a compositional bias: basic and acidic residues. Residues Met-1–Phe-47 form a disordered region. Positions Gly-12–Ser-29 are enriched in gly residues. A compositionally biased stretch (basic and acidic residues) spans Glu-31–Gly-43. TPR repeat units follow at residues Ala-36–Val-69, Ala-70–Ser-103, and Lys-105–Gln-137. One can recognise a U-box domain in the interval Asp-237–Val-311.

As to quaternary structure, homodimer.

It is found in the cytoplasm. The protein resides in the nucleus. The protein localises to the mitochondrion. The enzyme catalyses S-ubiquitinyl-[E2 ubiquitin-conjugating enzyme]-L-cysteine + [acceptor protein]-L-lysine = [E2 ubiquitin-conjugating enzyme]-L-cysteine + N(6)-ubiquitinyl-[acceptor protein]-L-lysine.. In terms of biological role, E3 ubiquitin-protein ligase which targets misfolded chaperone substrates towards proteasomal degradation. Collaborates with ATXN3 in the degradation of misfolded chaperone substrates: ATXN3 restricting the length of ubiquitin chain attached to STUB1/CHIP substrates and preventing further chain extension. The chain is E3 ubiquitin-protein ligase CHIP from Gallus gallus (Chicken).